The sequence spans 254 residues: Small ribosomal subunit protein uS2 (254 aa).

The protein belongs to the universal ribosomal protein uS2 family.

The polypeptide is Small ribosomal subunit protein uS2 (Borrelia recurrentis (strain A1)).